The following is a 638-amino-acid chain: Meiosis initiator protein (638 aa).

Disordered regions lie at residues 1-21 (MFGS…SLGP), 60-79 (NQRN…KNHT), 138-249 (LAGL…KGGQ), 404-433 (PSAY…SLHR), and 447-537 (GNSK…PCPP). The span at 7–20 (YLGSSEQPRANSLG) shows a compositional bias: polar residues. The basic motif; degenerate stretch occupies residues 62–75 (RNQNKLLSPNKKQR). A bHLH domain is found at 62–116 (RNQNKLLSPNKKQRKNHTSKLQELALLLPIALKTGTKKLTKKEILVHVLQYIQYL). Residues 76–116 (KNHTSKLQELALLLPIALKTGTKKLTKKEILVHVLQYIQYL) form a helix-loop-helix motif region. The span at 157–167 (TPSSSPSSQKS) shows a compositional bias: low complexity. A compositionally biased stretch (polar residues) spans 182–191 (TQASESQTRT). Over residues 412 to 430 (PQEKDTASKAPKDPPESHS) the composition is skewed to basic and acidic residues. Residues 453–465 (SSSSSSSSSSSSS) are compositionally biased toward low complexity. Basic residues predominate over residues 528 to 537 (KEKKKGPCPP). Positions 540-608 (KKKCVNGFIM…QHNRIVKQDG (69 aa)) form a DNA-binding region, HMG box.

In terms of assembly, interacts with STRA8.

It localises to the nucleus. Functionally, gatekeeper of meiotic initiation in both male and female germ cells. In complex with STRA8, directly activates the transcription of a subset of critical meiotic genes playing a central role in cell-cycle switching from mitosis to meiosis. Temporal expression of MEIOSIN is required for meiotic entry decision. The polypeptide is Meiosis initiator protein (Homo sapiens (Human)).